An 836-amino-acid chain; its full sequence is MARLGNCSLTWAALIILLLPGSLEECGHISVSAPIVHLGDPITASCIIKQNCSHLDPEPQILWRLGAELQPGGRQQRLSDGTQESIITLPHLNHTQAFLSCCLNWGNSLQILDQVELRAGYPPAIPHNLSCLMNLTTSSLICQWEPGPETHLPTSFTLKSFKSRGNCQTQGDSILDCVPKDGQSHCCIPRKHLLLYQNMGIWVQAENALGTSMSPQLCLDPMDVVKLEPPMLRTMDPSPEAAPPQAGCLQLCWEPWQPGLHINQKCELRHKPQRGEASWALVGPLPLEALQYELCGLLPATAYTLQIRCIRWPLPGHWSDWSPSLELRTTERAPTVRLDTWWRQRQLDPRTVQLFWKPVPLEEDSGRIQGYVVSWRPSGQAGAILPLCNTTELSCTFHLPSEAQEVALVAYNSAGTSRPTPVVFSESRGPALTRLHAMARDPHSLWVGWEPPNPWPQGYVIEWGLGPPSASNSNKTWRMEQNGRATGFLLKENIRPFQLYEIIVTPLYQDTMGPSQHVYAYSQEMAPSHAPELHLKHIGKTWAQLEWVPEPPELGKSPLTHYTIFWTNAQNQSFSAILNASSRGFVLHGLEPASLYHIHLMAASQAGATNSTVLTLMTLTPEGSELHIILGLFGLLLLLTCLCGTAWLCCSPNRKNPLWPSVPDPAHSSLGSWVPTIMEEDAFQLPGLGTPPITKLTVLEEDEKKPVPWESHNSSETCGLPTLVQTYVLQGDPRAVSTQPQSQSGTSDQVLYGQLLGSPTSPGPGHYLRCDSTQPLLAGLTPSPKSYENLWFQASPLGTLVTPAPSQEDDCVFGPLLNFPLLQGIRVHGMEALGSF.

Positions 1 to 24 are cleaved as a signal peptide; that stretch reads MARLGNCSLTWAALIILLLPGSLE. The 93-residue stretch at 25–117 folds into the Ig-like C2-type domain; the sequence is ECGHISVSAP…SLQILDQVEL (93 aa). At 25 to 627 the chain is on the extracellular side; it reads ECGHISVSAP…TLTPEGSELH (603 aa). 2 disulfides stabilise this stretch: Cys26–Cys52 and Cys46–Cys101. N-linked (GlcNAc...) asparagine glycosylation is found at Asn51, Asn93, Asn128, and Asn134. 5 consecutive Fibronectin type-III domains span residues 125 to 230, 233 to 332, 334 to 430, 431 to 528, and 530 to 623; these read IPHN…LEPP, RTMD…TTER, PTVR…SRGP, ALTR…MAPS, and APEL…TPEG. 5 disulfide bridges follow: Cys131–Cys142, Cys167–Cys218, Cys177–Cys186, Cys248–Cys295, and Cys266–Cys309. The short motif at 318 to 322 is the WSXWS motif element; that stretch reads WSDWS. 4 N-linked (GlcNAc...) asparagine glycosylation sites follow: Asn389, Asn474, Asn579, and Asn610. A helical membrane pass occupies residues 628-650; the sequence is IILGLFGLLLLLTCLCGTAWLCC. At 651–836 the chain is on the cytoplasmic side; it reads SPNRKNPLWP…VHGMEALGSF (186 aa). The Box 1 motif motif lies at 658 to 666; that stretch reads LWPSVPDPA.

It belongs to the type I cytokine receptor family. Type 2 subfamily. As to quaternary structure, homodimer. The dimeric receptor binds two CSF3 molecules. Interacts with CEACAM1; down-regulates the CSF3R-STAT3 pathway through recruitment of PTPN6 that dephosphorylates CSF3R. N-glycosylated. In terms of tissue distribution, one or several isoforms have been found in myelogenous leukemia cell line KG-1, leukemia U-937 cell line, in bone marrow cells, placenta, and peripheral blood granulocytes. Isoform GCSFR-2 is found only in leukemia U-937 cells. Isoform GCSFR-3 is highly expressed in placenta.

Its subcellular location is the secreted. It is found in the cell membrane. Receptor for granulocyte colony-stimulating factor (CSF3), essential for granulocytic maturation. Plays a crucial role in the proliferation, differentiation and survival of cells along the neutrophilic lineage. In addition it may function in some adhesion or recognition events at the cell surface. This chain is Granulocyte colony-stimulating factor receptor (CSF3R), found in Homo sapiens (Human).